The chain runs to 704 residues: Mannan-binding lectin serine protease 1 (704 aa).

The signal sequence occupies residues 1–24 (MRFLSFRRLLLYHVLCLTLTEVSA). Residues 25–143 (HTVELNEMFG…TGFDAHYMAV (119 aa)) form the CUB 1 domain. A homodimerization region spans residues 25-189 (HTVELNEMFG…HTDNRTCRVE (165 aa)). The interval 25–189 (HTVELNEMFG…HTDNRTCRVE (165 aa)) is interaction with MBL2. The interaction with FCN2 stretch occupies residues 25–283 (HTVELNEMFG…STQSHSIQIL (259 aa)). The segment at 25 to 305 (HTVELNEMFG…RLSYRAAGNE (281 aa)) is interaction with MBL1. N54 carries an N-linked (GlcNAc...) asparagine glycan. 7 residues coordinate Ca(2+): E73, D81, D126, S128, D144, V145, and E147. A disulfide bridge links C78 with C96. An EGF-like; calcium-binding domain is found at 144–187 (DVDECKEREDEELSCDHYCHNYIGGYYCSCRFGYILHTDNRTCR). Cystine bridges form between C148–C162, C158–C171, C173–C186, and C190–C217. Residues N164, Y165, and G168 each coordinate Ca(2+). N164 carries the post-translational modification (3R)-3-hydroxyasparagine. N-linked (GlcNAc...) asparagine glycosylation occurs at N183. Residues 190–302 (CSGNLFTQRT…RGWRLSYRAA (113 aa)) enclose the CUB 2 domain. Ca(2+)-binding residues include E240, D250, D287, and S289. C247 and C265 are disulfide-bonded. Sushi domains follow at residues 304–369 (NECP…TCKI) and 370–439 (VDCG…TCLP). 6 cysteine pairs are disulfide-bonded: C306-C354, C334-C367, C372-C419, C402-C437, C441-C577, and C480-C496. N-linked (GlcNAc...) asparagine glycans are attached at residues N390 and N412. Positions 454-701 (IFNGRPAQKG…NKDWIQRVTG (248 aa)) constitute a Peptidase S1 domain. The active-site Charge relay system is H495. The N-linked (GlcNAc...) asparagine glycan is linked to L538. Residue D557 is the Charge relay system of the active site. The N-linked (GlcNAc...) asparagine glycan is linked to E604. Cystine bridges form between C619/C636 and C647/C677. The Charge relay system role is filled by S651.

Belongs to the peptidase S1 family. Homodimer. Interacts with the oligomeric lectins MBL2, FCN2 and FCN3; triggers the lectin pathway of complement through activation of C3. Interacts with SERPING1. Interacts with COLEC11; probably triggers the lectin pathway of complement. In terms of processing, the iron and 2-oxoglutarate dependent 3-hydroxylation of aspartate and asparagine is (R) stereospecific within EGF domains. Post-translationally, N-glycosylated. Some N-linked glycan are of the complex-type. Autoproteolytic processing of the proenzyme produces the active enzyme composed on the heavy and the light chain held together by a disulfide bond. Isoform 1 but not isoform 2 is activated through autoproteolytic processing. In terms of tissue distribution, protein of the plasma which is primarily expressed by liver.

Its subcellular location is the secreted. Its activity is regulated as follows. Inhibited by SERPING1 and A2M. In terms of biological role, functions in the lectin pathway of complement, which performs a key role in innate immunity by recognizing pathogens through patterns of sugar moieties and neutralizing them. The lectin pathway is triggered upon binding of mannan-binding lectin (MBL) and ficolins to sugar moieties which leads to activation of the associated proteases MASP1 and MASP2. Functions as an endopeptidase and may activate MASP2 or C2 or directly activate C3 the key component of complement reaction. Isoform 2 may have an inhibitory effect on the activation of the lectin pathway of complement or may cleave IGFBP5. Also plays a role in development. This Rattus norvegicus (Rat) protein is Mannan-binding lectin serine protease 1 (Masp1).